Consider the following 456-residue polypeptide: SWI/SNF complex component SNF12 homolog (456 aa).

In terms of domain architecture, SWIB/MDM2 spans 234–310 (HVPQKYKVLG…PQLLREHLSP (77 aa)). A disordered region spans residues 435 to 456 (KQTTPNPTPQQISMAPSTPQTP).

The protein belongs to the SMARCD family. As to quaternary structure, part of a SWI-SNF complex.

It localises to the nucleus. In terms of biological role, involved in transcriptional activation and repression of select genes by chromatin remodeling (alteration of DNA-nucleosome topology). In Dictyostelium discoideum (Social amoeba), this protein is SWI/SNF complex component SNF12 homolog (snf12-1).